Here is a 227-residue protein sequence, read N- to C-terminus: PKHD-type hydroxylase NE2125 (227 aa).

One can recognise a Fe2OG dioxygenase domain in the interval lysine 78–serine 179. The Fe cation site is built by histidine 97, aspartate 99, and histidine 160. Residue arginine 170 coordinates 2-oxoglutarate.

It depends on Fe(2+) as a cofactor. The cofactor is L-ascorbate.

The polypeptide is PKHD-type hydroxylase NE2125 (Nitrosomonas europaea (strain ATCC 19718 / CIP 103999 / KCTC 2705 / NBRC 14298)).